We begin with the raw amino-acid sequence, 142 residues long: MSSLDEVAESRKQRLAELRKIKQLENKTRDSQEVQKNVIEHRNYDPEVQAPKMGFVEPPNMIESVEALSKEIEEKTKRKIEEQSSVPVEELDLVTLRPKKPTWDLERDLKERMRSLETQNQNAIAFYIQQLISERAHSTEKA.

Basic and acidic residues predominate over residues 24-45 (LENKTRDSQEVQKNVIEHRNYD). Positions 24-54 (LENKTRDSQEVQKNVIEHRNYDPEVQAPKMG) are disordered.

Belongs to the 40S cdc5-associated complex (or cwf complex), a spliceosome sub-complex reminiscent of a late-stage spliceosome composed of the U2, U5 and U6 snRNAs and at least brr2, cdc5, cwf2/prp3, cwf3/syf1, cwf4/syf3, cwf5/ecm2, spp42/cwf6, cwf7/spf27, cwf8, cwf9, cwf10, cwf11, cwf12, prp45/cwf13, cwf14, cwf15, cwf16, cwf17, cwf18, cwf19, cwf20, cwf21, cwf22, cwf23, cwf24, cwf25, cwf26, cyp7/cwf27, cwf28, cwf29/ist3, lea1, msl1, prp5/cwf1, prp10, prp12/sap130, prp17, prp22, sap61, sap62, sap114, sap145, slu7, smb1, smd1, smd3, smf1, smg1 and syf2.

The protein resides in the nucleus. In terms of biological role, involved in mRNA splicing where it associates with cdc5 and the other cwf proteins as part of the spliceosome. The chain is Pre-mRNA-splicing factor cwf18 (cwf18) from Schizosaccharomyces pombe (strain 972 / ATCC 24843) (Fission yeast).